The primary structure comprises 896 residues: Pentatricopeptide repeat-containing protein At5g03800 (896 aa).

PPR repeat units follow at residues lysine 113–proline 143, threonine 144–glutamine 178, asparagine 180–asparagine 214, serine 215–arginine 247, aspartate 248–valine 278, aspartate 284–glutamine 318, glutamate 319–glutamine 349, aspartate 350–lysine 380, asparagine 381–leucine 415, threonine 416–phenylalanine 450, asparagine 451–asparagine 481, serine 484–leucine 519, aspartate 520–serine 554, aspartate 555–histidine 585, aspartate 586–proline 620, aspartate 621–isoleucine 653, and threonine 659–glutamine 689. The interval valine 694–glutamate 769 is type E motif. The interval asparagine 770 to leucine 800 is type E(+) motif. Residues lysine 801–tryptophan 896 are type DYW motif.

The protein belongs to the PPR family. PCMP-H subfamily.

Its function is as follows. May play a role in embryogenesis. The polypeptide is Pentatricopeptide repeat-containing protein At5g03800 (EMB175) (Arabidopsis thaliana (Mouse-ear cress)).